Reading from the N-terminus, the 458-residue chain is Adenylosuccinate synthetase (458 aa).

GTP-binding positions include 17 to 23 and 45 to 47; these read GDEGKGK and GHT. The Proton acceptor role is filled by aspartate 18. Mg(2+) is bound by residues aspartate 18 and glycine 45. Residues 18-21, 43-46, threonine 137, arginine 151, glutamine 247, threonine 262, and arginine 330 contribute to the IMP site; these read DEGK and NAGH. Histidine 46 acts as the Proton donor in catalysis. 326–332 serves as a coordination point for substrate; that stretch reads VTTGRSR. GTP contacts are provided by residues arginine 332, 358–360, and 440–442; these read KLD and STS.

The protein belongs to the adenylosuccinate synthetase family. As to quaternary structure, homodimer. Mg(2+) is required as a cofactor.

It localises to the cytoplasm. The enzyme catalyses IMP + L-aspartate + GTP = N(6)-(1,2-dicarboxyethyl)-AMP + GDP + phosphate + 2 H(+). It functions in the pathway purine metabolism; AMP biosynthesis via de novo pathway; AMP from IMP: step 1/2. Plays an important role in the de novo pathway of purine nucleotide biosynthesis. Catalyzes the first committed step in the biosynthesis of AMP from IMP. In Verminephrobacter eiseniae (strain EF01-2), this protein is Adenylosuccinate synthetase.